Consider the following 542-residue polypeptide: MATELKEYLVIIPDLPDVLAKRQVLLKPHNQDAAPLVKAGRVPFFGSTLAHHSPEGQQVAENGTVMIIKAESEEEIREIIRKDIFTIEGVWDFGKLSIWPFKIARMRNRRDNSWVVQKFGGTSIGKFPDKTSSDMLCTKFRKESLRNNEQITADCQELLDYTSAAKRFNLDINGKAKDKMVSFGEKLSCRLMVAMLRDRDIPAEYVDLSDIVPSNNLDQLKPEFFHEAAAVFGKRVEACNGRVPVITGFFGTVPGSLIDSGIGRGYSDLCAVLVAIGLHAERVQIWKEVDGIFTADPREVPDARCLPSITPSEAAELTFYGSEVIHHLALSLAIQAKPPVSIFVKNVQKPWGQGTVVVPSDGDDTSSWPIDYLDPSDSDSTSSTALPKMPTAVTIKRDITIFNILSNKQSMSHGFFVKVFTILAEHDISVDLISTSEVHVSMAINSSNMEPSQIKNVQCRLSEEGEVNVLPDMAILSLVGAELKNMTGIAGRMFAILGEQHVNIEMISQGASEINISCVIPDKDATRALNMLHDELFTKSAI.

ACT domains follow at residues 404–472 (ILSN…VLPD) and 478–542 (LVGA…KSAI).

It belongs to the aspartokinase family.

It carries out the reaction L-aspartate + ATP = 4-phospho-L-aspartate + ADP. The protein operates within mycotoxin biosynthesis. Its function is as follows. Aspartate kinase; part of the gene cluster that mediates the biosynthesis of fusaric acid, a mycotoxin with low to moderate toxicity to animals and humans, but with high phytotoxic properties. L-aspartate is suggested as fusaric acid amino acid precursor that is activated and further processed to O-acetyl-L-homoserine by cluster enzymes aspartate kinase FUB3 and homoserine O-acetyltransferase FUB5, as well as enzymes of the primary metabolism. The polyketide synthase (PKS) FUB1 generates the triketide trans-2-hexenal which is presumptively released by the hydrolase FUB4 and linked to the NRPS-bound amino acid precursor by NAD(P)-dependent dehydrogenase FUB6. FUB1, FUB4, and the non-canonical NRPS Fub8 may form an enzyme complex. Further processing of the NRPS-bound intermediate might be carried out by FUB6 and the sulfhydrylase FUB7, enabling a spontaneous electrocyclization to close the carbon backbone of fusaric acid. Dihydrofusaric acid is likely to be released via reduction by the thioester reductase (TR) domain of FUB8 whereupon the final oxidation to fusaric acid may (also) be performed by the FMN-dependent dehydrogenase FUB9. This is Aspartate kinase FUB3 from Fusarium oxysporum f. sp. lycopersici (strain 4287 / CBS 123668 / FGSC 9935 / NRRL 34936) (Fusarium vascular wilt of tomato).